Here is a 793-residue protein sequence, read N- to C-terminus: uncharacterized protein (793 aa).

The signal sequence occupies residues 1 to 22 (MKFKYGAIFFSGFLGLSAILAA). A lipid anchor (N-palmitoyl cysteine) is attached at Cys23. The S-diacylglycerol cysteine moiety is linked to residue Cys23. Disordered stretches follow at residues 181–200 (LNQKMTSSSEGKNSSGTLTV), 212–264 (KIED…DDQV), and 444–504 (KAPS…SNNN). Over residues 212 to 227 (KIEDSAKANGKSDEKG) the composition is skewed to basic and acidic residues. The span at 237 to 246 (ATFSLVQLKQ) shows a compositional bias: polar residues. Residues 247-264 (TQEKTDDSQDTKNSDDQV) are compositionally biased toward basic and acidic residues. Residues 449–468 (NGENGQTNEGNSTNGEQNLL) show a composition bias toward polar residues. Residues 472–485 (EVKDDSKPKEEVKS) show a composition bias toward basic and acidic residues. The span at 491–504 (KESSQNQGKKSNNN) shows a compositional bias: low complexity.

The protein belongs to the MG185/MG260 family.

It is found in the cell membrane. This is an uncharacterized protein from Mycoplasma pneumoniae (strain ATCC 29342 / M129 / Subtype 1) (Mycoplasmoides pneumoniae).